The chain runs to 440 residues: Xylose isomerase (440 aa).

Active-site residues include histidine 100 and aspartate 103. The Mg(2+) site is built by glutamate 231, glutamate 267, histidine 270, aspartate 295, aspartate 306, aspartate 308, and aspartate 338.

The protein belongs to the xylose isomerase family. In terms of assembly, homotetramer. Mg(2+) serves as cofactor.

The protein localises to the cytoplasm. The enzyme catalyses alpha-D-xylose = alpha-D-xylulofuranose. This Burkholderia thailandensis (strain ATCC 700388 / DSM 13276 / CCUG 48851 / CIP 106301 / E264) protein is Xylose isomerase.